The sequence spans 383 residues: MKNKLPPFIEIYRALIATPSISATEEALDQSNADLITLLADWFKDLGFNVEVQPVPGTRNKFNMLASYGQGAGGLLLAGHTDTVPFDDGRWTRDPFTLTEHDGKLYGLGTADMKGFFAFILDALRDVDVTKLKKPLYILATADEETSMAGARYFAETTALRPDCAIIGEPTSLQPVRAHKGHISNAIRIQGQSGHSSDPARGVNAIELMHDAIGHILQLRDNLKERYHYEAFTVPYPTLNLGHIHGGDASNRICACCELHMDIRPQPGMTLNELNGLLNDALAPVSERWPGRLTVDELHPPIPGYECPPNHQLVEVVEKLLGAKTEVVNYCTEAPFIQTLCPTLVLGPGSINQAHQPDEYLETRFIKPTRELIIQVIHHFCWH.

His80 is a Zn(2+) binding site. The active site involves Asp82. Residue Asp112 coordinates Zn(2+). The active site involves Glu144. Residues Glu145, Glu169, and His355 each contribute to the Zn(2+) site.

The protein belongs to the peptidase M20A family. ArgE subfamily. Homodimer. It depends on Zn(2+) as a cofactor. Co(2+) is required as a cofactor. Glutathione serves as cofactor.

Its subcellular location is the cytoplasm. The catalysed reaction is N(2)-acetyl-L-ornithine + H2O = L-ornithine + acetate. The protein operates within amino-acid biosynthesis; L-arginine biosynthesis; L-ornithine from N(2)-acetyl-L-ornithine (linear): step 1/1. Functionally, catalyzes the hydrolysis of the amide bond of N(2)-acetylated L-amino acids. Cleaves the acetyl group from N-acetyl-L-ornithine to form L-ornithine, an intermediate in L-arginine biosynthesis pathway, and a branchpoint in the synthesis of polyamines. In Shigella flexneri serotype 5b (strain 8401), this protein is Acetylornithine deacetylase.